The chain runs to 333 residues: Glycerol-3-phosphate dehydrogenase [NAD(P)+] (333 aa).

NADPH contacts are provided by Phe19, Arg40, Arg41, and Lys113. Lys113 and Gly141 together coordinate sn-glycerol 3-phosphate. Ala145 is a binding site for NADPH. The sn-glycerol 3-phosphate site is built by Lys196, Asp249, Ser259, Arg260, and Asn261. Lys196 serves as the catalytic Proton acceptor. Arg260 serves as a coordination point for NADPH. Residues Val282 and Glu283 each coordinate NADPH.

The protein belongs to the NAD-dependent glycerol-3-phosphate dehydrogenase family.

The protein localises to the cytoplasm. The catalysed reaction is sn-glycerol 3-phosphate + NAD(+) = dihydroxyacetone phosphate + NADH + H(+). It catalyses the reaction sn-glycerol 3-phosphate + NADP(+) = dihydroxyacetone phosphate + NADPH + H(+). It participates in membrane lipid metabolism; glycerophospholipid metabolism. In terms of biological role, catalyzes the reduction of the glycolytic intermediate dihydroxyacetone phosphate (DHAP) to sn-glycerol 3-phosphate (G3P), the key precursor for phospholipid synthesis. The sequence is that of Glycerol-3-phosphate dehydrogenase [NAD(P)+] from Sinorhizobium fredii (strain NBRC 101917 / NGR234).